Consider the following 152-residue polypeptide: Single-stranded DNA-binding protein, mitochondrial (152 aa).

The N-terminal 16 residues, 1–16 (MFRRPVLQVFRQFVRH), are a transit peptide targeting the mitochondrion. In terms of domain architecture, SSB spans 30–141 (LNRVQLLGRV…IIAGKKLVVH (112 aa)). 2 positions are modified to phosphoserine: Ser67 and Ser79. At Lys113 the chain carries N6-acetyllysine. Lys122 is modified (N6-succinyllysine).

In terms of assembly, homotetramer. Interacts with MPG/AAG, through inhibition of its glycosylase activity it potentially prevents formation of DNA breaks in ssDNA, ensuring that base removal primarily occurs in dsDNA. Interacts with POLDIP2. Interacts with PRIMPOL. As to expression, expressed in all the layers of the retina (at protein level).

The protein resides in the mitochondrion. The protein localises to the mitochondrion matrix. It localises to the mitochondrion nucleoid. Functionally, binds preferentially and cooperatively to pyrimidine rich single-stranded DNA (ss-DNA). In vitro, required to maintain the copy number of mitochondrial DNA (mtDNA) and plays a crucial role during mtDNA replication by stimulating the activity of the replisome components POLG and TWNK at the replication fork. Promotes the activity of the gamma complex polymerase POLG, largely by organizing the template DNA and eliminating secondary structures to favor ss-DNA conformations that facilitate POLG activity. In addition it is able to promote the 5'-3' unwinding activity of the mtDNA helicase TWNK. May also function in mtDNA repair. The polypeptide is Single-stranded DNA-binding protein, mitochondrial (Ssbp1) (Mus musculus (Mouse)).